The sequence spans 312 residues: RNA pseudouridylate synthase domain-containing protein 1 (312 aa).

Residue M1 is modified to N-acetylmethionine. D67 is an active-site residue. A disordered region spans residues 256 to 298; the sequence is ATPDPDPEDRGPRPGSPSALLPGPGRPPPPPTKPPETEAQRGP. Over residues 279-289 the composition is skewed to pro residues; the sequence is PGRPPPPPTKP.

Belongs to the pseudouridine synthase RluA family.

The protein is RNA pseudouridylate synthase domain-containing protein 1 (RPUSD1) of Homo sapiens (Human).